The chain runs to 365 residues: Ribosome biogenesis regulatory protein homolog (365 aa).

Met1 bears the N-acetylmethionine mark. Ser5 is subject to Phosphoserine. Residues Lys154 and Lys226 each participate in a glycyl lysine isopeptide (Lys-Gly) (interchain with G-Cter in SUMO2) cross-link. The disordered stretch occupies residues Gly233–Lys253. The span at Phe235–Pro245 shows a compositional bias: basic and acidic residues. Residue Lys266 forms a Glycyl lysine isopeptide (Lys-Gly) (interchain with G-Cter in SUMO2) linkage. Position 273 is a citrulline (Arg273). Residues Pro280 to Lys365 form a disordered region. Positions Lys302–Gly325 are enriched in basic residues. The segment covering Gly337–Gly350 has biased composition (gly residues). Over residues Gly351–Lys365 the composition is skewed to basic residues.

Belongs to the RRS1 family. Component of a hexameric 5S RNP precursor complex, composed of 5S RNA, RRS1, RPF2/BXDC1, RPL5, RPL11 and HEATR3; this complex acts as a precursor for ribosome assembly. Citrullinated by PADI4.

The protein resides in the nucleus. It localises to the nucleolus. Involved in ribosomal large subunit assembly. May regulate the localization of the 5S RNP/5S ribonucleoprotein particle to the nucleolus. The protein is Ribosome biogenesis regulatory protein homolog (RRS1) of Homo sapiens (Human).